A 218-amino-acid chain; its full sequence is Putative tRNA methyltransferase MG248 (218 aa).

This sequence belongs to the TrmK family.

It localises to the cytoplasm. This Mycoplasma genitalium (strain ATCC 33530 / DSM 19775 / NCTC 10195 / G37) (Mycoplasmoides genitalium) protein is Putative tRNA methyltransferase MG248.